Consider the following 296-residue polypeptide: Putative S-adenosyl-L-methionine-dependent methyltransferase MAP_3881 (296 aa).

S-adenosyl-L-methionine-binding positions include aspartate 121 and aspartate 150–leucine 151.

The protein belongs to the UPF0677 family.

In terms of biological role, exhibits S-adenosyl-L-methionine-dependent methyltransferase activity. The chain is Putative S-adenosyl-L-methionine-dependent methyltransferase MAP_3881 from Mycolicibacterium paratuberculosis (strain ATCC BAA-968 / K-10) (Mycobacterium paratuberculosis).